A 536-amino-acid polypeptide reads, in one-letter code: Cytochrome P450 monooxygenase pbrC (536 aa).

A helical transmembrane segment spans residues 20–39 (VMLPALVGFAFLIYQAFFAI). C479 provides a ligand contact to heme.

The protein belongs to the cytochrome P450 family. Heme serves as cofactor.

The protein localises to the membrane. It participates in secondary metabolite biosynthesis; terpenoid biosynthesis. In terms of biological role, cytochrome P450 monooxygenase; part of the gene cluster that mediates the biosynthesis of the sesquiterpenoid aspterric acid (AA), an inhibitor of dihydroxy-acid dehydratase (DHAD) effective as an herbicide. PbrC catalyzes the third and last step within the pathway and converts the alpha-epoxy carboxylate intermediate produced by the cytochrome P450 monooxygenase pbrB from (-)daucane into the tricyclic aspterric acid. This chain is Cytochrome P450 monooxygenase pbrC, found in Penicillium brasilianum.